The sequence spans 328 residues: Malate dehydrogenase (328 aa).

16 to 22 (GAAGQIS) is a binding site for NAD(+). Substrate contacts are provided by Arg97 and Arg103. NAD(+) is bound by residues Asn110, Gln117, and 134 to 136 (VGN). Substrate contacts are provided by Asn136 and Arg167. The Proton acceptor role is filled by His192.

The protein belongs to the LDH/MDH superfamily. MDH type 2 family.

The enzyme catalyses (S)-malate + NAD(+) = oxaloacetate + NADH + H(+). Its function is as follows. Catalyzes the reversible oxidation of malate to oxaloacetate. This chain is Malate dehydrogenase, found in Corynebacterium glutamicum (strain R).